A 132-amino-acid polypeptide reads, in one-letter code: Gonadotropin subunit beta-1 (132 aa).

Positions 1–17 (MMRGVTMVLLLPMLVWA) are cleaved as a signal peptide. 5 cysteine pairs are disulfide-bonded: cysteine 25–cysteine 73, cysteine 39–cysteine 88, cysteine 50–cysteine 104, cysteine 54–cysteine 106, and cysteine 109–cysteine 116. 2 N-linked (GlcNAc...) asparagine glycosylation sites follow: asparagine 29 and asparagine 46.

This sequence belongs to the glycoprotein hormones subunit beta family. As to quaternary structure, heterodimer of an alpha and a beta chain.

The protein resides in the secreted. Involved in gametogenesis and steroidogenesis. This Ictalurus punctatus (Channel catfish) protein is Gonadotropin subunit beta-1 (cgba).